Here is a 194-residue protein sequence, read N- to C-terminus: MPNWGGGAKCGACEKTVYHAEEIQCNGRSFHKTCFHCMACRKALDSTTVAAHESEIYCKVCYGRRYGPKGIGFGQGAGCLSTDTGEHLGLQFQQSPKPARAATTSNPSKFSAKFGESEKCPRCGKSVYAAEKVMGGGKPWHKTCFRCAICGKSLESTNVTDKDGELYCKVCYAKNFGPTGIGFGGLTQQVEKKE.

The interaction with TCAP stretch occupies residues 1–5 (MPNWG). The LIM zinc-binding 1 domain maps to 10-61 (CGACEKTVYHAEEIQCNGRSFHKTCFHCMACRKALDSTTVAAHESEIYCKVC). Residues 64–69 (RRYGPK) carry the Nuclear localization signal motif. Positions 94-105 (QSPKPARAATTS) are interaction with CLF2. Residues Ser-95, Ser-111, and Ser-153 each carry the phosphoserine modification. One can recognise an LIM zinc-binding 2 domain in the interval 120–171 (CPRCGKSVYAAEKVMGGGKPWHKTCFRCAICGKSLESTNVTDKDGELYCKVC).

In terms of assembly, self-associates. Oligomeric in the cytoplasm and monomeric in the nucleus. Homooligomers preferentially form along the actin cytoskeleton. Interacts with TCAP. Interacts with LDHD, MYOD1, MYOG, ACTN2, NRAP, MYF6. Interacts (via N-terminus)D with GLRX3 (via C-terminus) and PPP3CA; GLRX3 and calcineurin compete for interaction with CSRP3. Interacts with CFL2; the stoichiometry influences F-actin depolymerization and possibly two molecules of CFL2 can interact with one molecule of CSRP3 resulting in the highest functional impact; the interaction is stronger with phosphorylated CFL2. Phosphorylated by PKC/PRKCA.

It is found in the nucleus. It localises to the cytoplasm. The protein resides in the cytoskeleton. Its subcellular location is the myofibril. The protein localises to the sarcomere. It is found in the z line. Its function is as follows. Positive regulator of myogenesis. Acts as a cofactor for myogenic bHLH transcription factors such as MYOD1, and probably MYOG and MYF6. Enhances the DNA-binding activity of the MYOD1:TCF3 isoform E47 complex and may promote formation of a functional MYOD1:TCF3 isoform E47:MEF2A complex involved in myogenesis. Plays a crucial and specific role in the organization of cytosolic structures in cardiomyocytes. Could play a role in mechanical stretch sensing. May be a scaffold protein that promotes the assembly of interacting proteins at Z-line structures. It is essential for calcineurin anchorage to the Z line. Required for stress-induced calcineurin-NFAT activation. The role in regulation of cytoskeleton dynamics by association with CFL2 is reported conflictingly. Proposed to contribute to the maintenance of muscle cell integrity through an actin-based mechanism. Can directly bind to actin filaments, cross-link actin filaments into bundles without polarity selectivity and protect them from dilution- and cofilin-mediated depolymerization; the function seems to involve its self-association. In vitro can inhibit PKC/PRKCA activity. Proposed to be involved in cardiac stress signaling by down-regulating excessive PKC/PRKCA signaling. This is Cysteine and glycine-rich protein 3 (Csrp3) from Mus musculus (Mouse).